Reading from the N-terminus, the 752-residue chain is BCLAF1 and THRAP3 family member 3 (752 aa).

Residues 1 to 13 (MARSRSRSPRWKQ) are compositionally biased toward basic residues. 3 disordered regions span residues 1-114 (MARS…YMPT), 132-177 (PTVQ…QMSL), and 190-252 (DELR…DPAR). Phosphoserine is present on residues serine 15 and serine 17. The span at 23 to 57 (FEYHEERHFHGHYDPEYRHDQQRPFTWRMDDEKHG) shows a compositional bias: basic and acidic residues. Serine 78 and serine 80 each carry phosphoserine. Over residues 85–109 (PVEKFDTYKPHQEYFPGRGDDDRRS) the composition is skewed to basic and acidic residues. Residues 190-199 (DELRHQRVQE) show a composition bias toward basic and acidic residues. Serine 205 carries the post-translational modification Phosphoserine. Basic and acidic residues-rich tracts occupy residues 222 to 231 (RYPEDHDFRK) and 238 to 252 (RPTD…DPAR). Lysine 416 is covalently cross-linked (Glycyl lysine isopeptide (Lys-Gly) (interchain with G-Cter in SUMO2)). Serine 592 is subject to Phosphoserine.

It belongs to the BCLAF1/THRAP3 family.

The protein resides in the mitochondrion. The protein is BCLAF1 and THRAP3 family member 3 of Mus musculus (Mouse).